A 1250-amino-acid chain; its full sequence is SRC kinase signaling inhibitor 1 (1250 aa).

Basic and acidic residues predominate over residues 19–45 (AEGRARSPREEVGPRDPGGRGEPDPER). The tract at residues 19–78 (AEGRARSPREEVGPRDPGGRGEPDPERSSPPMLSADDAEYPREYRTLGGGGGGGSGGRRF) is disordered. S47 and S52 each carry phosphoserine. Positions 65–75 (LGGGGGGGSGG) are enriched in gly residues. Position 79 is a phosphoserine (S79). At T86 the chain carries Phosphothreonine. Phosphoserine occurs at positions 87, 98, 211, 233, 237, 247, and 293. At Y309 the chain carries Phosphotyrosine. The segment at 352 to 448 (ASRESSPTRR…RRDVKPDEDL (97 aa)) is disordered. The segment covering 354-364 (RESSPTRRLNN) has biased composition (polar residues). Residues 365 to 374 (LSPASHLASS) are compositionally biased toward low complexity. A phosphoserine mark is found at S366, S375, and S392. Residues 381–399 (PSGLPSGLPSGSPSRSRLS) show a composition bias toward low complexity. R397 and R404 each carry omega-N-methylarginine. S411, S430, and S432 each carry phosphoserine. Positions 437–448 (LERRDVKPDEDL) are enriched in basic and acidic residues. Position 464 is a phosphotyrosine (Y464). The segment at 538–710 (PSSPQKLADV…ASSTPAGQPT (173 aa)) is disordered. A compositionally biased stretch (pro residues) spans 552–563 (GGPPPPHSPYSG). A phosphoserine mark is found at S559, S562, and S566. At R567 the chain carries Omega-N-methylarginine. 5 positions are modified to phosphoserine: S569, S579, S581, S583, and S588. The segment covering 590–607 (GGKARSTGSASTAGAPPS) has biased composition (low complexity). The span at 628-640 (KDTETRERMEAME) shows a compositional bias: basic and acidic residues. Residues S664 and S688 each carry the phosphoserine modification. T691 and T704 each carry phosphothreonine. A compositionally biased stretch (low complexity) spans 701 to 710 (ASSTPAGQPT). Coiled coils occupy residues 712–753 (VSRL…RALL) and 793–813 (EELI…IQRD). The tract at residues 714 to 764 (RLQMQLHLRGLQNSASDLRGQLQQLRNVQLQNQESVRALLKPTEADVSMRV) is interaction with SNAP25. 2 positions are modified to phosphoserine: S911 and S933. Disordered stretches follow at residues 924–982 (GLDF…ERDW) and 1016–1094 (DCAS…TGEV). T951 is modified (phosphothreonine). S1054 is subject to Phosphoserine. The segment covering 1069–1078 (KSPPPPPPRR) has biased composition (pro residues). 2 positions are modified to phosphoserine: S1110 and S1127. A disordered region spans residues 1155–1250 (ELESGGSSVP…FGARNSSISF (96 aa)). Polar residues predominate over residues 1217 to 1250 (PNETSSPGSEKPSGSRTSIPVLTSFGARNSSISF).

This sequence belongs to the SRCIN1 family. As to quaternary structure, interacts with the N-terminal coiled-coil region of SNAP25. Interacts with BCAR1/p130Cas and SRC through its C-terminal domain. Interacts with CSK, CTTN, SORBS3/vinexin, SYP and MAPRE3/EB3. Post-translationally, tyrosine-phosphorylated in response to EGF and to cell adhesion to integrin ligands. As to expression, expressed predominantly in central nervous system with high levels detected in cortex, cerebellum, midbrain and spinal cord (at protein level). Also expressed in testis and epithelial-rich tissues such as mammary gland, lung and kidney.

It localises to the cytoplasm. The protein localises to the cytoskeleton. The protein resides in the cell projection. Its subcellular location is the axon. It is found in the dendrite. It localises to the presynapse. The protein localises to the postsynapse. The protein resides in the postsynaptic density. Functionally, acts as a negative regulator of SRC by activating CSK which inhibits SRC activity and downstream signaling, leading to impaired cell spreading and migration. Regulates dendritic spine morphology. Involved in calcium-dependent exocytosis. May play a role in neurotransmitter release or synapse maintenance. The chain is SRC kinase signaling inhibitor 1 (Srcin1) from Mus musculus (Mouse).